The sequence spans 345 residues: tRNA N6-adenosine threonylcarbamoyltransferase (345 aa).

Fe cation contacts are provided by histidine 109 and histidine 113. Substrate-binding positions include 136–140, aspartate 169, glycine 182, aspartate 186, and asparagine 284; that span reads TVSGG. Aspartate 312 is a binding site for Fe cation.

It belongs to the KAE1 / TsaD family. The cofactor is Fe(2+).

It localises to the cytoplasm. It catalyses the reaction L-threonylcarbamoyladenylate + adenosine(37) in tRNA = N(6)-L-threonylcarbamoyladenosine(37) in tRNA + AMP + H(+). Functionally, required for the formation of a threonylcarbamoyl group on adenosine at position 37 (t(6)A37) in tRNAs that read codons beginning with adenine. Is involved in the transfer of the threonylcarbamoyl moiety of threonylcarbamoyl-AMP (TC-AMP) to the N6 group of A37, together with TsaE and TsaB. TsaD likely plays a direct catalytic role in this reaction. The protein is tRNA N6-adenosine threonylcarbamoyltransferase of Prosthecochloris aestuarii (strain DSM 271 / SK 413).